The sequence spans 548 residues: Membrane protein insertase YidC (548 aa).

Residues 6–26 (NLLVIALLFVSFMIWQAWEQD) form a helical membrane-spanning segment. The segment at 28–56 (NPQPQTQQTTQTTTTAAGSAADQGVPASG) is disordered. A compositionally biased stretch (low complexity) spans 29–42 (PQPQTQQTTQTTTT). The next 4 helical transmembrane spans lie at 350–370 (FVGN…GIMY), 424–444 (FPLI…MGSI), 458–478 (LSAQ…MFFI), and 499–519 (PVIF…YYIV).

It belongs to the OXA1/ALB3/YidC family. Type 1 subfamily. Interacts with the Sec translocase complex via SecD. Specifically interacts with transmembrane segments of nascent integral membrane proteins during membrane integration.

Its subcellular location is the cell inner membrane. Required for the insertion and/or proper folding and/or complex formation of integral membrane proteins into the membrane. Involved in integration of membrane proteins that insert both dependently and independently of the Sec translocase complex, as well as at least some lipoproteins. Aids folding of multispanning membrane proteins. The sequence is that of Membrane protein insertase YidC from Salmonella paratyphi C (strain RKS4594).